A 742-amino-acid chain; its full sequence is Transcription factor FFUJ_09177 (742 aa).

Residues 15-41 (CVSCARSKQRCDGHSPCGRCSLKNLDC) constitute a DNA-binding region (zn(2)-C6 fungal-type). Disordered stretches follow at residues 50-80 (GQNS…VQSQ) and 218-244 (HSLD…SVRD). Residues 218–240 (HSLDISSYQGQSNQTSPETTSHS) show a composition bias toward polar residues.

The protein resides in the nucleus. Functionally, transcription factor; part of the DMATS1 gene cluster that mediates the biosynthesis of a reversely N-prenylated monomeric L-tryptophan (r-N-DMAT). Seems not to regulate the expression of the DMATS1 cluster. The sequence is that of Transcription factor FFUJ_09177 from Gibberella fujikuroi (strain CBS 195.34 / IMI 58289 / NRRL A-6831) (Bakanae and foot rot disease fungus).